The primary structure comprises 342 residues: Holliday junction branch migration complex subunit RuvB (342 aa).

Positions 1–21 are disordered; it reads MSVEHSPVDPSAEPPEKAEEA. The interval 1–184 is large ATPase domain (RuvB-L); it reads MSVEHSPVDP…FGFTAQLDYY (184 aa). ATP contacts are provided by residues Leu-23, Arg-24, Gly-65, Lys-68, Thr-69, Thr-70, 131–133, Arg-174, Tyr-184, and Arg-221; that span reads EDF. Residue Thr-69 coordinates Mg(2+). Residues 185-255 are small ATPAse domain (RuvB-S); that stretch reads EVADLERIVT…GAETALDLYE (71 aa). A head domain (RuvB-H) region spans residues 258 to 342; it reads PLGLDRLDRA…PPDSSGEGLF (85 aa). Residues Arg-313 and Arg-318 each contribute to the DNA site.

This sequence belongs to the RuvB family. As to quaternary structure, homohexamer. Forms an RuvA(8)-RuvB(12)-Holliday junction (HJ) complex. HJ DNA is sandwiched between 2 RuvA tetramers; dsDNA enters through RuvA and exits via RuvB. An RuvB hexamer assembles on each DNA strand where it exits the tetramer. Each RuvB hexamer is contacted by two RuvA subunits (via domain III) on 2 adjacent RuvB subunits; this complex drives branch migration. In the full resolvosome a probable DNA-RuvA(4)-RuvB(12)-RuvC(2) complex forms which resolves the HJ.

It is found in the cytoplasm. The enzyme catalyses ATP + H2O = ADP + phosphate + H(+). The RuvA-RuvB-RuvC complex processes Holliday junction (HJ) DNA during genetic recombination and DNA repair, while the RuvA-RuvB complex plays an important role in the rescue of blocked DNA replication forks via replication fork reversal (RFR). RuvA specifically binds to HJ cruciform DNA, conferring on it an open structure. The RuvB hexamer acts as an ATP-dependent pump, pulling dsDNA into and through the RuvAB complex. RuvB forms 2 homohexamers on either side of HJ DNA bound by 1 or 2 RuvA tetramers; 4 subunits per hexamer contact DNA at a time. Coordinated motions by a converter formed by DNA-disengaged RuvB subunits stimulates ATP hydrolysis and nucleotide exchange. Immobilization of the converter enables RuvB to convert the ATP-contained energy into a lever motion, pulling 2 nucleotides of DNA out of the RuvA tetramer per ATP hydrolyzed, thus driving DNA branch migration. The RuvB motors rotate together with the DNA substrate, which together with the progressing nucleotide cycle form the mechanistic basis for DNA recombination by continuous HJ branch migration. Branch migration allows RuvC to scan DNA until it finds its consensus sequence, where it cleaves and resolves cruciform DNA. This Cutibacterium acnes (strain DSM 16379 / KPA171202) (Propionibacterium acnes) protein is Holliday junction branch migration complex subunit RuvB.